Reading from the N-terminus, the 600-residue chain is Polypeptide N-acetylgalactosaminyltransferase (600 aa).

At 1-7 the chain is on the cytoplasmic side; the sequence is MVRRKLR. Residues 8-28 form a helical; Signal-anchor for type II membrane protein membrane-spanning segment; that stretch reads LLVILAGIWLVGIVVYLFKGD. Over 29–600 the chain is Lumenal; it reads DQSEFEKRVI…KWTFSLSKNR (572 aa). Cystine bridges form between C154–C382, C373–C451, C484–C501, C524–C541, and C567–C583. The tract at residues 163-268 is catalytic subdomain A; the sequence is LPDTSVIITF…EKWLEPLLDR (106 aa). Residues T171, D204, and R229 each coordinate substrate. D252 is a binding site for Mn(2+). S253 is a binding site for substrate. H254 provides a ligand contact to Mn(2+). The tract at residues 328-390 is catalytic subdomain B; the sequence is PIRTPMIAGG…PCSRVGHVFR (63 aa). W359 is a substrate binding site. Residue H387 coordinates Mn(2+). 3 residues coordinate substrate: R390, H393, and Y395. In terms of domain architecture, Ricin B-type lectin spans 466–595; sequence KIPSVQDIAF…SSYTQKWTFS (130 aa).

The protein belongs to the glycosyltransferase 2 family. GalNAc-T subfamily. The cofactor is Mn(2+). Post-translationally, O-glycosylated.

It is found in the golgi apparatus membrane. The catalysed reaction is L-seryl-[protein] + UDP-N-acetyl-alpha-D-galactosamine = a 3-O-[N-acetyl-alpha-D-galactosaminyl]-L-seryl-[protein] + UDP + H(+). It carries out the reaction L-threonyl-[protein] + UDP-N-acetyl-alpha-D-galactosamine = a 3-O-[N-acetyl-alpha-D-galactosaminyl]-L-threonyl-[protein] + UDP + H(+). Its pathway is protein modification; protein glycosylation. Its activity is regulated as follows. No change in activity by addition of up to 10% methanol or glycerol, or 5% acetonitrile. 40% reduction in activity by 10% acetonitrile or by lyophilization. Activity requires divalent cations, the best being Mn(2+) (10-20 mM), followed by Co(2+), Mg(2+) and Ca(2+). Loss of activity with Cu(2+) or in the presence of EDTA. Inhibited by UDP, but not by UMP, UTP, ADP or GDP nucleotides. No inhibition by galactose, N-acetylglucosamine or N-acetylgalactosamine sugars. In terms of biological role, catalyzes the initial reaction in O-linked oligosaccharide biosynthesis, the transfer of an N-acetyl-D-galactosamine residue to a serine or threonine residue on the protein receptor. Has a broad substrate specificity. Acceptor peptides include Muc2, Muc5Ac, Muc1a and Muc1a', with Muc2 as the best acceptor. Acts on non-glycosylated and mono- or multi-glycosylated peptide substrates. Transfers preferably to threonine rather than serine residue. Thr-15 is the most preferred site of glycosylation in Muc2 peptide PTTTPITTTTTVTPTPTPTGTQTK having proline residues at position -1, and at positions +1 and +3, where the number represents the distance from the C-terminal and N-terminal hydroxyl amino acid, respectively. Transfer of the N-acetyl-D-galactosamine (GalNAc) is optimal with proline residues at positions -3, -1, +1 and +3, but other amino acids are tolerated, although some, such as phenylalanine, isoleucine or leucine at -1, or lysine at +3 prevent the transfer completely. Second GalNAc is transferred to Muc2 Thr-2 or Thr-13, both of which have two proline residues nearby. Up to nine sites can be glycosylated within Muc2, but eight are used simultaneously since Thr-19 and Thr-21 are not detected to be glycosylated at the same time. Glycosylation is not detected of a potential site, which is next to an already glycosylated site, but only one amino acid is needed in between two glycosylation sites. Ser-5 is the preferred glycosylation site in Muc5Ac peptide GTTPSPVPTTSTTSAP into which up to four GalNAcs can be attached. Only the threonine residues are detected as pontential glycosylation sites in Muc1a APPAHGVTSAPDTRPAPGC and Muc1a' AHGVTSAPDTR peptides. Transferase activity is restricted to UDP-GalNAc as a donor, and none of the nucleotide sugars UDP-Gal, UDP-GlcNAc, GDP-fucose, UDP-xylose, UDP-glucuronic acid or CMP-neuraminic acid are utilized as donors. The sequence is that of Polypeptide N-acetylgalactosaminyltransferase from Biomphalaria glabrata (Bloodfluke planorb).